Here is a 450-residue protein sequence, read N- to C-terminus: Phosphoglucosamine mutase (450 aa).

Serine 101 serves as the catalytic Phosphoserine intermediate. Residues serine 101, aspartate 240, aspartate 242, and aspartate 244 each coordinate Mg(2+). A Phosphoserine modification is found at serine 101.

The protein belongs to the phosphohexose mutase family. The cofactor is Mg(2+). Post-translationally, activated by phosphorylation.

The enzyme catalyses alpha-D-glucosamine 1-phosphate = D-glucosamine 6-phosphate. Its function is as follows. Catalyzes the conversion of glucosamine-6-phosphate to glucosamine-1-phosphate. The polypeptide is Phosphoglucosamine mutase (Streptococcus sanguinis (strain SK36)).